The sequence spans 126 residues: Profilin (126 aa).

The protein belongs to the profilin family. Occurs in many kinds of cells as a complex with monomeric actin in a 1:1 ratio. As to expression, expressed in ovary and head.

It is found in the cytoplasm. Its subcellular location is the cytoskeleton. Functionally, binds to actin and affects the structure of the cytoskeleton. At high concentrations, profilin prevents the polymerization of actin, whereas it enhances it at low concentrations. By binding to PIP2, it may inhibit the formation of IP3 and DG. This profilin is required for intercellular cytoplasm transport during Drosophila oogenesis. Function in neurons is essential for adult survival, and is important for climbing behavior and activity. This chain is Profilin (chic), found in Drosophila melanogaster (Fruit fly).